The following is a 201-amino-acid chain: Probable chemoreceptor glutamine deamidase CheD 2 (201 aa).

Belongs to the CheD family.

It carries out the reaction L-glutaminyl-[protein] + H2O = L-glutamyl-[protein] + NH4(+). Functionally, probably deamidates glutamine residues to glutamate on methyl-accepting chemotaxis receptors (MCPs), playing an important role in chemotaxis. In Chromobacterium violaceum (strain ATCC 12472 / DSM 30191 / JCM 1249 / CCUG 213 / NBRC 12614 / NCIMB 9131 / NCTC 9757 / MK), this protein is Probable chemoreceptor glutamine deamidase CheD 2.